A 146-amino-acid polypeptide reads, in one-letter code: Large ribosomal subunit protein uL13 (146 aa).

It belongs to the universal ribosomal protein uL13 family. Part of the 50S ribosomal subunit.

Its function is as follows. This protein is one of the early assembly proteins of the 50S ribosomal subunit, although it is not seen to bind rRNA by itself. It is important during the early stages of 50S assembly. In Malacoplasma penetrans (strain HF-2) (Mycoplasma penetrans), this protein is Large ribosomal subunit protein uL13.